The chain runs to 100 residues: Large ribosomal subunit protein uL23 (100 aa).

Belongs to the universal ribosomal protein uL23 family. As to quaternary structure, part of the 50S ribosomal subunit. Contacts protein L29, and trigger factor when it is bound to the ribosome.

In terms of biological role, one of the early assembly proteins it binds 23S rRNA. One of the proteins that surrounds the polypeptide exit tunnel on the outside of the ribosome. Forms the main docking site for trigger factor binding to the ribosome. The protein is Large ribosomal subunit protein uL23 of Buchnera aphidicola subsp. Acyrthosiphon pisum (strain 5A).